The chain runs to 61 residues: Protein translocase subunit SecE (61 aa).

The chain crosses the membrane as a helical span at residues 39 to 59 (VGIIIIGLIGFILSIVSQVLF).

This sequence belongs to the SecE/SEC61-gamma family. As to quaternary structure, component of the Sec protein translocase complex. Heterotrimer consisting of SecY (alpha), SecG (beta) and SecE (gamma) subunits. The heterotrimers can form oligomers, although 1 heterotrimer is thought to be able to translocate proteins. Interacts with the ribosome. May interact with SecDF, and other proteins may be involved.

Its subcellular location is the cell membrane. Functionally, essential subunit of the Sec protein translocation channel SecYEG. Clamps together the 2 halves of SecY. May contact the channel plug during translocation. The protein is Protein translocase subunit SecE of Methanosphaera stadtmanae (strain ATCC 43021 / DSM 3091 / JCM 11832 / MCB-3).